Consider the following 550-residue polypeptide: Glucose-6-phosphate isomerase (550 aa).

E357 serves as the catalytic Proton donor. Active-site residues include H389 and K509.

Belongs to the GPI family.

The protein localises to the cytoplasm. It catalyses the reaction alpha-D-glucose 6-phosphate = beta-D-fructose 6-phosphate. It participates in carbohydrate biosynthesis; gluconeogenesis. It functions in the pathway carbohydrate degradation; glycolysis; D-glyceraldehyde 3-phosphate and glycerone phosphate from D-glucose: step 2/4. Catalyzes the reversible isomerization of glucose-6-phosphate to fructose-6-phosphate. The chain is Glucose-6-phosphate isomerase from Anaeromyxobacter dehalogenans (strain 2CP-C).